A 344-amino-acid polypeptide reads, in one-letter code: Protein RecA (344 aa).

66-73 (GPESSGKT) serves as a coordination point for ATP.

It belongs to the RecA family.

It is found in the cytoplasm. Its function is as follows. Can catalyze the hydrolysis of ATP in the presence of single-stranded DNA, the ATP-dependent uptake of single-stranded DNA by duplex DNA, and the ATP-dependent hybridization of homologous single-stranded DNAs. It interacts with LexA causing its activation and leading to its autocatalytic cleavage. This chain is Protein RecA, found in Methylobacillus flagellatus (strain ATCC 51484 / DSM 6875 / VKM B-1610 / KT).